Consider the following 629-residue polypeptide: TRAF3-interacting protein 1 (629 aa).

Residues 130-511 form a disordered region; that stretch reads AGDKLDQKGK…RSLVSEASRK (382 aa). The segment covering 145–306 has biased composition (basic and acidic residues); that stretch reads SQDKENREGR…KIKAAEEISK (162 aa). The stretch at 220 to 282 forms a coiled coil; that stretch reads RDREKDKTRE…RREKEKDKER (63 aa). Positions 352-362 are enriched in acidic residues; the sequence is EQDETESEGEA. Positions 394-403 are enriched in low complexity; it reads RPSSARPAAP. A compositionally biased stretch (basic and acidic residues) spans 471 to 511; it reads GDDKHGGLVKKILETKKDYESSPSSKSKEQDRSLVSEASRK. Positions 511–602 form a coiled coil; the sequence is KKERELVARE…QLIKDQQDKI (92 aa).

It belongs to the TRAF3IP1 family. Component of the IFT complex B, at least composed of ift20, ift22, ift25, ift27, ift46, ift52, traf3ip1/ift54, ift57, ift74, ift80, ift81, and ift88. Interacts with ift88. Interacts with il13ra1. Binds to microtubules, traf3 and disc1. Interacts with map4.

It is found in the cytoplasm. The protein resides in the cytoskeleton. The protein localises to the cell projection. It localises to the cilium. Its subcellular location is the cilium axoneme. It is found in the cilium basal body. Its function is as follows. Plays an inhibitory role on IL13 signaling by binding to IL13RA1 and recruits TRAF3 and DISC1 to the microtubules. Involved in the regulation of microtubule cytoskeleton organization. Is a negative regulator of microtubule stability, acting through the control of MAP4 levels. Involved in ciliogenesis. In Danio rerio (Zebrafish), this protein is TRAF3-interacting protein 1 (traf3ip1).